A 199-amino-acid chain; its full sequence is Probable chemoreceptor glutamine deamidase CheD (199 aa).

This sequence belongs to the CheD family.

The catalysed reaction is L-glutaminyl-[protein] + H2O = L-glutamyl-[protein] + NH4(+). Its function is as follows. Probably deamidates glutamine residues to glutamate on methyl-accepting chemotaxis receptors (MCPs), playing an important role in chemotaxis. This Nitratidesulfovibrio vulgaris (strain ATCC 29579 / DSM 644 / CCUG 34227 / NCIMB 8303 / VKM B-1760 / Hildenborough) (Desulfovibrio vulgaris) protein is Probable chemoreceptor glutamine deamidase CheD.